Consider the following 509-residue polypeptide: ATP synthase subunit alpha (509 aa).

Residue Gly-169–Thr-176 participates in ATP binding.

It belongs to the ATPase alpha/beta chains family. In terms of assembly, F-type ATPases have 2 components, CF(1) - the catalytic core - and CF(0) - the membrane proton channel. CF(1) has five subunits: alpha(3), beta(3), gamma(1), delta(1), epsilon(1). CF(0) has three main subunits: a(1), b(2) and c(9-12). The alpha and beta chains form an alternating ring which encloses part of the gamma chain. CF(1) is attached to CF(0) by a central stalk formed by the gamma and epsilon chains, while a peripheral stalk is formed by the delta and b chains.

It localises to the cell inner membrane. The enzyme catalyses ATP + H2O + 4 H(+)(in) = ADP + phosphate + 5 H(+)(out). Functionally, produces ATP from ADP in the presence of a proton gradient across the membrane. The alpha chain is a regulatory subunit. The polypeptide is ATP synthase subunit alpha (Xanthobacter autotrophicus (strain ATCC BAA-1158 / Py2)).